The chain runs to 319 residues: HPr kinase/phosphorylase (319 aa).

Residues His141 and Lys162 contribute to the active site. 156-163 (GNSGVGKS) serves as a coordination point for ATP. Ser163 provides a ligand contact to Mg(2+). Residue Asp180 is the Proton acceptor; for phosphorylation activity. Proton donor; for dephosphorylation activity of the active site. The interval 204–213 (MEIRGIGIID) is important for the catalytic mechanism of both phosphorylation and dephosphorylation. Position 205 (Glu205) interacts with Mg(2+). Arg246 is a catalytic residue. The tract at residues 267–272 (PVKVGR) is important for the catalytic mechanism of dephosphorylation.

Belongs to the HPrK/P family. Homohexamer. Mg(2+) serves as cofactor.

The enzyme catalyses [HPr protein]-L-serine + ATP = [HPr protein]-O-phospho-L-serine + ADP + H(+). It catalyses the reaction [HPr protein]-O-phospho-L-serine + phosphate + H(+) = [HPr protein]-L-serine + diphosphate. Its function is as follows. Catalyzes the ATP- as well as the pyrophosphate-dependent phosphorylation of a specific serine residue in HPr, a phosphocarrier protein of the phosphoenolpyruvate-dependent sugar phosphotransferase system (PTS). HprK/P also catalyzes the pyrophosphate-producing, inorganic phosphate-dependent dephosphorylation (phosphorolysis) of seryl-phosphorylated HPr (P-Ser-HPr). The two antagonistic activities of HprK/P are regulated by several intracellular metabolites, which change their concentration in response to the absence or presence of rapidly metabolisable carbon sources (glucose, fructose, etc.) in the growth medium. Therefore, by controlling the phosphorylation state of HPr, HPrK/P is a sensor enzyme that plays a major role in the regulation of carbon metabolism and sugar transport: it mediates carbon catabolite repression (CCR), and regulates PTS-catalyzed carbohydrate uptake and inducer exclusion. This is HPr kinase/phosphorylase from Lactobacillus gasseri (strain ATCC 33323 / DSM 20243 / BCRC 14619 / CIP 102991 / JCM 1131 / KCTC 3163 / NCIMB 11718 / NCTC 13722 / AM63).